The chain runs to 467 residues: A-type ATP synthase subunit B (467 aa).

The tract at residues 95-114 (GKGQPRDHMPLPPPEDFRDV) is disordered.

The protein belongs to the ATPase alpha/beta chains family. Has multiple subunits with at least A(3), B(3), C, D, E, F, H, I and proteolipid K(x).

It is found in the cell membrane. Component of the A-type ATP synthase that produces ATP from ADP in the presence of a proton gradient across the membrane. The B chain is a regulatory subunit. This Pyrobaculum aerophilum (strain ATCC 51768 / DSM 7523 / JCM 9630 / CIP 104966 / NBRC 100827 / IM2) protein is A-type ATP synthase subunit B.